The sequence spans 283 residues: Arylamine N-acetyltransferase (283 aa).

Cysteine 70 (acyl-thioester intermediate) is an active-site residue. Residues histidine 110 and aspartate 127 contribute to the active site.

The protein belongs to the arylamine N-acetyltransferase family. In terms of assembly, homodimer and homotetramer.

The enzyme catalyses an arylamine + acetyl-CoA = an N-acetylarylamine + CoA. Its function is as follows. Catalyzes the transfer of the acetyl group from acetyl coenzyme A to the free amino group of arylamines and hydrazines. Is able to utilize not only acetyl-CoA, but also n-propionyl-CoA and acetoacetyl-CoA as acyl donors, although at a lower rate. As acetyl-CoA and propionyl-CoA are products of cholesterol catabolism and the nat gene is likely present in the same operon than genes involved in cholesterol degradation, this enzyme could have a role in the utilization and regulation of these CoA species. This Mycobacterium bovis (strain ATCC BAA-935 / AF2122/97) protein is Arylamine N-acetyltransferase (nat).